Reading from the N-terminus, the 599-residue chain is Group II intron-encoded protein LtrA (599 aa).

In terms of domain architecture, Reverse transcriptase spans 70 to 361 (IIQSLKDGTY…QPARFLGYDI (292 aa)). Residues 381–549 (NGSVELLIPL…AKCCELCGTS (169 aa)) form an intron maturase type-2 region.

The protein in the N-terminal section; belongs to the bacterial reverse transcriptase family. As to quaternary structure, homodimer. Requires Mg(2+) as cofactor.

The catalysed reaction is DNA(n) + a 2'-deoxyribonucleoside 5'-triphosphate = DNA(n+1) + diphosphate. In terms of biological role, multifunctional protein that promotes group II intron splicing and mobility by acting both on RNA and DNA. It has three activities: reverse transcriptase (RT) for intron duplication, maturase to promote splicing, and DNA endonuclease for site-specific cleavage of recipient alleles. The intron-encoded protein promotes splicing by facilitating the formation of the catalytically active structure of the intron RNA. After splicing, the protein remains bound to the excised intron lariat RNA, forming ribonucleoprotein particles, and cleaving the antisense strand of the recipient DNA in the 3' exon. After DNA cleavage, retrohoming occurs by a target DNA-primed reverse transcription of the intron RNA that had reverse spliced into the sense strand of the recipient DNA. It also contributes to the recognition of the DNA target site and acts as a repressor of its own translation. This chain is Group II intron-encoded protein LtrA (ltrA), found in Lactococcus lactis subsp. cremoris (Streptococcus cremoris).